The primary structure comprises 130 residues: Glycine cleavage system H protein (130 aa).

A Lipoyl-binding domain is found at 25–106 (VALIGITDFA…PFDTWMVKLK (82 aa)). K66 carries the N6-lipoyllysine modification.

It belongs to the GcvH family. As to quaternary structure, the glycine cleavage system is composed of four proteins: P, T, L and H. It depends on (R)-lipoate as a cofactor.

In terms of biological role, the glycine cleavage system catalyzes the degradation of glycine. The H protein shuttles the methylamine group of glycine from the P protein to the T protein. The sequence is that of Glycine cleavage system H protein from Leptospira biflexa serovar Patoc (strain Patoc 1 / Ames).